Here is a 586-residue protein sequence, read N- to C-terminus: Acyl-coenzyme A synthetase ACSM3, mitochondrial (586 aa).

The N-terminal 27 residues, 1–27 (MLARVTRKMLRHAKCFQRLAIFGSVRA), are a transit peptide targeting the mitochondrion. Lys-73 and Lys-106 each carry N6-succinyllysine. Position 157 is an N6-acetyllysine (Lys-157). Residues 235–243 (TSGTSGYPK), 374–379 (EGYGQT), Asp-461, Arg-476, and Lys-572 each bind ATP.

This sequence belongs to the ATP-dependent AMP-binding enzyme family. Requires Mg(2+) as cofactor. Mn(2+) serves as cofactor.

It localises to the mitochondrion. Its subcellular location is the mitochondrion matrix. The enzyme catalyses a medium-chain fatty acid + ATP + CoA = a medium-chain fatty acyl-CoA + AMP + diphosphate. It catalyses the reaction propanoate + ATP + CoA = propanoyl-CoA + AMP + diphosphate. It carries out the reaction butanoate + ATP + CoA = butanoyl-CoA + AMP + diphosphate. The catalysed reaction is 2-methylpropanoate + ATP + CoA = 2-methylpropanoyl-CoA + AMP + diphosphate. The enzyme catalyses 2-methylbutanoate + ATP + CoA = 2-methylbutanoyl-CoA + AMP + diphosphate. It catalyses the reaction octanoate + ATP + CoA = octanoyl-CoA + AMP + diphosphate. Catalyzes the activation of fatty acids by CoA to produce an acyl-CoA, the first step in fatty acid metabolism. Capable of activating medium-chain fatty acids with a preference for isobutyrate among fatty acids with 2-6 carbon atoms. The protein is Acyl-coenzyme A synthetase ACSM3, mitochondrial (ACSM3) of Homo sapiens (Human).